The sequence spans 591 residues: Maintenance of mitochondrial morphology protein 1 (591 aa).

Over 1–83 (MGFNIPWNGT…AQPSLSFTQG (83 aa)) the chain is Lumenal. The chain crosses the membrane as a helical span at residues 84 to 104 (LLVGQLSVVLLIGAFIKFFIF). Topologically, residues 105-591 (GEAPPPPSRS…GSMPDSVAVT (487 aa)) are cytoplasmic. Disordered regions lie at residues 138-159 (PRTL…SSST), 170-189 (YSAT…VHHS), 334-398 (PGTS…KHAH), and 479-591 (EAEA…VAVT). Composition is skewed to polar residues over residues 146–159 (STSN…SSST) and 170–179 (YSATPTNPTS). A compositionally biased stretch (basic residues) spans 180-189 (KHGRSRVHHS). The 271-residue stretch at 192–462 (QPESLDWFNV…EPRVQVVGLP (271 aa)) folds into the SMP-LTD domain. The span at 336–371 (TSDQTMGPSASPPNQSTSTETASINDQTSEGQSTQR) shows a compositional bias: polar residues. Positions 379–389 (PTNSTPTAATA) are enriched in low complexity. Composition is skewed to gly residues over residues 496-525 (TAGG…GMGY) and 536-550 (GDGG…GAGG). Residues 563–578 (GGDDGEGPGRRSDERF) are compositionally biased toward basic and acidic residues.

It belongs to the MMM1 family. Homodimer. Component of the ER-mitochondria encounter structure (ERMES) or MDM complex, composed of MMM1, MDM10, MDM12 and MDM34. An MMM1 homodimer associates with one molecule of MDM12 on each side in a pairwise head-to-tail manner, and the SMP-LTD domains of MMM1 and MDM12 generate a continuous hydrophobic tunnel for phospholipid trafficking.

It is found in the endoplasmic reticulum membrane. In terms of biological role, component of the ERMES/MDM complex, which serves as a molecular tether to connect the endoplasmic reticulum (ER) and mitochondria. Components of this complex are involved in the control of mitochondrial shape and protein biogenesis, and function in nonvesicular lipid trafficking between the ER and mitochondria. The MDM12-MMM1 subcomplex functions in the major beta-barrel assembly pathway that is responsible for biogenesis of all outer membrane beta-barrel proteins, and acts in a late step after the SAM complex. The MDM10-MDM12-MMM1 subcomplex further acts in the TOM40-specific pathway after the action of the MDM12-MMM1 complex. Essential for establishing and maintaining the structure of mitochondria and maintenance of mtDNA nucleoids. This chain is Maintenance of mitochondrial morphology protein 1, found in Ajellomyces capsulatus (strain G186AR / H82 / ATCC MYA-2454 / RMSCC 2432) (Darling's disease fungus).